The sequence spans 90 residues: Barrier-to-autointegration factor-like protein (90 aa).

Belongs to the BAF family. Homodimer. Heterodimerizes with BANF1.

It localises to the nucleus. It is found in the cytoplasm. May play a role in BANF1 regulation and influence tissue-specific roles of BANF1. The chain is Barrier-to-autointegration factor-like protein (BANF2) from Bos taurus (Bovine).